The chain runs to 130 residues: Fluoride-specific ion channel FluC (130 aa).

Helical transmembrane passes span 2–22 (GLLLILVGIGGGLGAMSRFAL), 35–55 (IGILLCNIIGSLIIGMMAAFL), 72–92 (LFVTGFLGGFTTFSSFSLDIL), and 107–127 (ILVSVIVSLIAVILGFYFIMG). 2 residues coordinate Na(+): Gly-79 and Thr-82.

It belongs to the fluoride channel Fluc/FEX (TC 1.A.43) family.

It is found in the cell inner membrane. The enzyme catalyses fluoride(in) = fluoride(out). With respect to regulation, na(+) is not transported, but it plays an essential structural role and its presence is essential for fluoride channel function. Functionally, fluoride-specific ion channel. Important for reducing fluoride concentration in the cell, thus reducing its toxicity. The chain is Fluoride-specific ion channel FluC from Francisella philomiragia subsp. philomiragia (strain ATCC 25017 / CCUG 19701 / FSC 153 / O#319-036).